Here is a 272-residue protein sequence, read N- to C-terminus: 2-C-methyl-D-erythritol 4-phosphate cytidylyltransferase (272 aa).

This sequence belongs to the IspD/TarI cytidylyltransferase family. IspD subfamily.

The catalysed reaction is 2-C-methyl-D-erythritol 4-phosphate + CTP + H(+) = 4-CDP-2-C-methyl-D-erythritol + diphosphate. The protein operates within isoprenoid biosynthesis; isopentenyl diphosphate biosynthesis via DXP pathway; isopentenyl diphosphate from 1-deoxy-D-xylulose 5-phosphate: step 2/6. In terms of biological role, catalyzes the formation of 4-diphosphocytidyl-2-C-methyl-D-erythritol from CTP and 2-C-methyl-D-erythritol 4-phosphate (MEP). This chain is 2-C-methyl-D-erythritol 4-phosphate cytidylyltransferase, found in Xanthomonas oryzae pv. oryzae (strain PXO99A).